A 303-amino-acid polypeptide reads, in one-letter code: 3-methyl-2-oxobutanoate hydroxymethyltransferase (303 aa).

Residues 1-10 (MDSSGTVRNQ) are compositionally biased toward polar residues. The disordered stretch occupies residues 1 to 41 (MDSSGTVRNQTSDDHSRPADAAGTAATLYGAPAETRSPRRS). Mg(2+)-binding residues include aspartate 84 and aspartate 123. 3-methyl-2-oxobutanoate is bound by residues 84 to 85 (DS), aspartate 123, and lysine 153. Residue glutamate 155 coordinates Mg(2+). Residue glutamate 221 is the Proton acceptor of the active site.

The protein belongs to the PanB family. As to quaternary structure, homodecamer; pentamer of dimers. Mg(2+) serves as cofactor.

It is found in the cytoplasm. The catalysed reaction is 3-methyl-2-oxobutanoate + (6R)-5,10-methylene-5,6,7,8-tetrahydrofolate + H2O = 2-dehydropantoate + (6S)-5,6,7,8-tetrahydrofolate. It functions in the pathway cofactor biosynthesis; (R)-pantothenate biosynthesis; (R)-pantoate from 3-methyl-2-oxobutanoate: step 1/2. Catalyzes the reversible reaction in which hydroxymethyl group from 5,10-methylenetetrahydrofolate is transferred onto alpha-ketoisovalerate to form ketopantoate. The polypeptide is 3-methyl-2-oxobutanoate hydroxymethyltransferase (Frankia alni (strain DSM 45986 / CECT 9034 / ACN14a)).